The primary structure comprises 205 residues: MELNGLRVSRETQERLQHFAALFQKWAKAINLVAPSTLDDLWHRHIADSSQVFQIHPQPITWVDLGSGGGFPGVITAIFLAELQGGWVHLVESNHKKAAFLRTALRETNARGSVHSIRIEDAYTEVRECSAISARALTDLDGLIGYSSPWMLGKENCRGFFHKGRDYLREIDKARGRWEFDLLEHKSAVEQESVILEISNLRRLV.

S-adenosyl-L-methionine is bound by residues Gly66, Phe71, 119–120 (IE), and Arg135.

The protein belongs to the methyltransferase superfamily. RNA methyltransferase RsmG family.

It localises to the cytoplasm. It catalyses the reaction guanosine(527) in 16S rRNA + S-adenosyl-L-methionine = N(7)-methylguanosine(527) in 16S rRNA + S-adenosyl-L-homocysteine. Specifically methylates the N7 position of guanine in position 527 of 16S rRNA. The chain is Ribosomal RNA small subunit methyltransferase G from Rhizobium johnstonii (strain DSM 114642 / LMG 32736 / 3841) (Rhizobium leguminosarum bv. viciae).